Consider the following 506-residue polypeptide: Chaperone SurA (506 aa).

Positions 1-29 (MMRRLHSSRRFSGSLLALALGLALPLAHA) are cleaved as a signal peptide. PpiC domains lie at 219-320 (PVML…KVLQ) and 351-450 (VTQT…QVLE).

The protein localises to the periplasm. It carries out the reaction [protein]-peptidylproline (omega=180) = [protein]-peptidylproline (omega=0). Functionally, chaperone involved in the correct folding and assembly of outer membrane proteins. Recognizes specific patterns of aromatic residues and the orientation of their side chains, which are found more frequently in integral outer membrane proteins. May act in both early periplasmic and late outer membrane-associated steps of protein maturation. In Bordetella avium (strain 197N), this protein is Chaperone SurA.